A 366-amino-acid chain; its full sequence is tRNA N6-adenosine threonylcarbamoyltransferase (366 aa).

A divalent metal cation-binding residues include histidine 130, histidine 134, and tyrosine 151. Residues 151–155 (YVSGG), aspartate 183, glycine 198, glutamate 202, and asparagine 297 each bind substrate. Residue aspartate 325 coordinates a divalent metal cation.

The protein belongs to the KAE1 / TsaD family. As to quaternary structure, component of the EKC/KEOPS complex composed of at least BUD32, CGI121, GON7, KAE1 and PCC1; the whole complex dimerizes. It depends on a divalent metal cation as a cofactor.

It localises to the cytoplasm. Its subcellular location is the nucleus. It catalyses the reaction L-threonylcarbamoyladenylate + adenosine(37) in tRNA = N(6)-L-threonylcarbamoyladenosine(37) in tRNA + AMP + H(+). Its function is as follows. Component of the EKC/KEOPS complex that is required for the formation of a threonylcarbamoyl group on adenosine at position 37 (t(6)A37) in tRNAs that read codons beginning with adenine. The complex is probably involved in the transfer of the threonylcarbamoyl moiety of threonylcarbamoyl-AMP (TC-AMP) to the N6 group of A37. KAE1 likely plays a direct catalytic role in this reaction, but requires other protein(s) of the complex to fulfill this activity. The EKC/KEOPS complex also promotes both telomere uncapping and telomere elongation. The complex is required for efficient recruitment of transcriptional coactivators. The chain is tRNA N6-adenosine threonylcarbamoyltransferase from Cryptococcus neoformans var. neoformans serotype D (strain JEC21 / ATCC MYA-565) (Filobasidiella neoformans).